Consider the following 342-residue polypeptide: Cyclin-dependent kinase-like 4 (342 aa).

The region spanning Tyr-4 to Phe-286 is the Protein kinase domain. Residues Ile-10–Val-18 and Lys-33 each bind ATP. The short motif at Arg-45–Glu-51 is the [NKR]KIAxRE element. Asp-126 (proton acceptor) is an active-site residue. The segment at Lys-295–Arg-328 is disordered.

This sequence belongs to the protein kinase superfamily. CMGC Ser/Thr protein kinase family. CDC2/CDKX subfamily.

The protein localises to the cytoplasm. It carries out the reaction L-seryl-[protein] + ATP = O-phospho-L-seryl-[protein] + ADP + H(+). The catalysed reaction is L-threonyl-[protein] + ATP = O-phospho-L-threonyl-[protein] + ADP + H(+). The sequence is that of Cyclin-dependent kinase-like 4 (Cdkl4) from Mus musculus (Mouse).